The primary structure comprises 347 residues: Protein RecA (347 aa).

67-74 (GPESSGKT) is a binding site for ATP.

This sequence belongs to the RecA family.

Its subcellular location is the cytoplasm. Its function is as follows. Can catalyze the hydrolysis of ATP in the presence of single-stranded DNA, the ATP-dependent uptake of single-stranded DNA by duplex DNA, and the ATP-dependent hybridization of homologous single-stranded DNAs. It interacts with LexA causing its activation and leading to its autocatalytic cleavage. This is Protein RecA from Helicobacter pylori (strain P12).